The sequence spans 38 residues: Large ribosomal subunit protein bL36 (38 aa).

This sequence belongs to the bacterial ribosomal protein bL36 family.

This is Large ribosomal subunit protein bL36 from Limosilactobacillus fermentum (strain NBRC 3956 / LMG 18251) (Lactobacillus fermentum).